Here is a 343-residue protein sequence, read N- to C-terminus: Holliday junction branch migration complex subunit RuvB (343 aa).

The large ATPase domain (RuvB-L) stretch occupies residues 1–178; sequence MNFVQQNREG…FGMILELQFY (178 aa). Residues Leu17, Arg18, Gly59, Lys62, Thr63, Thr64, 125 to 127, Arg168, Tyr178, and Arg215 each bind ATP; that span reads EDY. Thr63 serves as a coordination point for Mg(2+). The tract at residues 179 to 249 is small ATPAse domain (RuvB-S); sequence TVKELMEIIK…LVEKTMDILE (71 aa). The head domain (RuvB-H) stretch occupies residues 252–343; it reads KLGLDEMDRK…DESLRKSDES (92 aa). Arg307 and Arg312 together coordinate DNA.

The protein belongs to the RuvB family. In terms of assembly, homohexamer. Forms an RuvA(8)-RuvB(12)-Holliday junction (HJ) complex. HJ DNA is sandwiched between 2 RuvA tetramers; dsDNA enters through RuvA and exits via RuvB. An RuvB hexamer assembles on each DNA strand where it exits the tetramer. Each RuvB hexamer is contacted by two RuvA subunits (via domain III) on 2 adjacent RuvB subunits; this complex drives branch migration. In the full resolvosome a probable DNA-RuvA(4)-RuvB(12)-RuvC(2) complex forms which resolves the HJ.

The protein resides in the cytoplasm. The catalysed reaction is ATP + H2O = ADP + phosphate + H(+). In terms of biological role, the RuvA-RuvB-RuvC complex processes Holliday junction (HJ) DNA during genetic recombination and DNA repair, while the RuvA-RuvB complex plays an important role in the rescue of blocked DNA replication forks via replication fork reversal (RFR). RuvA specifically binds to HJ cruciform DNA, conferring on it an open structure. The RuvB hexamer acts as an ATP-dependent pump, pulling dsDNA into and through the RuvAB complex. RuvB forms 2 homohexamers on either side of HJ DNA bound by 1 or 2 RuvA tetramers; 4 subunits per hexamer contact DNA at a time. Coordinated motions by a converter formed by DNA-disengaged RuvB subunits stimulates ATP hydrolysis and nucleotide exchange. Immobilization of the converter enables RuvB to convert the ATP-contained energy into a lever motion, pulling 2 nucleotides of DNA out of the RuvA tetramer per ATP hydrolyzed, thus driving DNA branch migration. The RuvB motors rotate together with the DNA substrate, which together with the progressing nucleotide cycle form the mechanistic basis for DNA recombination by continuous HJ branch migration. Branch migration allows RuvC to scan DNA until it finds its consensus sequence, where it cleaves and resolves cruciform DNA. This Pseudothermotoga lettingae (strain ATCC BAA-301 / DSM 14385 / NBRC 107922 / TMO) (Thermotoga lettingae) protein is Holliday junction branch migration complex subunit RuvB.